The chain runs to 118 residues: Large ribosomal subunit protein uL18 (118 aa).

This sequence belongs to the universal ribosomal protein uL18 family. As to quaternary structure, part of the 50S ribosomal subunit; part of the 5S rRNA/L5/L18/L25 subcomplex. Contacts the 5S and 23S rRNAs.

Functionally, this is one of the proteins that bind and probably mediate the attachment of the 5S RNA into the large ribosomal subunit, where it forms part of the central protuberance. The chain is Large ribosomal subunit protein uL18 from Parvibaculum lavamentivorans (strain DS-1 / DSM 13023 / NCIMB 13966).